The following is a 712-amino-acid chain: MSQEKQVFSIDLAGRQLTVETGQLAKQANGAVLVRYGDTAVLSTATASKEAKNVDFFPLTVNYEERLYAVGKIPGGFIKREGRPSEKAILASRLIDRPIRPLFADGFRNEVQVVSIVMSVDQDCSSEMAAMLGSSLALSISDIPFEGPIAGATVGRINGEFVINPTVEQQEQSDIHLVVAGTKDAINMVEAGADQVPEETMLEAIMFGHDEIKRLIAFQEEIVQAVGKEKSEVKLYEVDADLNQAVREMAEEDMHSAIQVHEKHAREDAINEVKKRVIEHYEAQEADADTLGQVNEILYKIVKEEVRRLITVEKIRPDGRKGDEIRPLASEVGILSRTHGSGLFTRGQTQALSICTLGALGDVQILDGLGVEESKRFMHHYNFPSFSVGETRPMRGPGRREIGHGAIGERALEPVIPSEKDFPYTVRLVSEVLESNGSTSQASICGSTLAMMDAGVPLKAPVAGIAMGLVKTGEHYTILSDIQGMEDHLGDMDFKVAGTAQGVTALQMDIKIDGLSREILEEALQQAKVGRVHILNHMLSVIPEPRTELSAYAPKIITMTINPDKIRDVIGPSGKQINKIIEETGVKIDIEQDGTVFISSINQEMNDKAKKIIEDIVREVQVGEIYEAKVKRVEKFGAFVELFSGKDGLVHISELALERVGKVEDVVKIGDVITVKVIEIDKQGRVNLSRKVLLKEEQEKEAVKEENKQEQQ.

Residues D487 and D493 each contribute to the Mg(2+) site. The 60-residue stretch at 554–613 (PKIITMTINPDKIRDVIGPSGKQINKIIEETGVKIDIEQDGTVFISSINQEMNDKAKKII) folds into the KH domain. The S1 motif domain maps to 623-691 (GEIYEAKVKR…KQGRVNLSRK (69 aa)).

It belongs to the polyribonucleotide nucleotidyltransferase family. The cofactor is Mg(2+).

It is found in the cytoplasm. The catalysed reaction is RNA(n+1) + phosphate = RNA(n) + a ribonucleoside 5'-diphosphate. Functionally, involved in mRNA degradation. Catalyzes the phosphorolysis of single-stranded polyribonucleotides processively in the 3'- to 5'-direction. This is Polyribonucleotide nucleotidyltransferase from Bacillus cereus (strain ATCC 14579 / DSM 31 / CCUG 7414 / JCM 2152 / NBRC 15305 / NCIMB 9373 / NCTC 2599 / NRRL B-3711).